A 461-amino-acid chain; its full sequence is Transforming growth factor beta-1-induced transcript 1 protein (461 aa).

Position 1 is an N-acetylmethionine (M1). A disordered region spans residues 1-87 (MEDLDALLSD…PFSSSSGVLG (87 aa)). Residues 1–200 (MEDLDALLSD…GCPSPPGQTS (200 aa)) are transcription activation. The tract at residues 1-240 (MEDLDALLSD…CNKPIAGQVV (240 aa)) is interaction with PTK2B/PYK2. The short motif at 3-15 (DLDALLSDLETTT) is the LD motif 1 element. A Phosphothreonine modification is found at T33. A Phosphotyrosine modification is found at Y38. A compositionally biased stretch (low complexity) spans 44–53 (TGSGESSGTT). Y60 carries the post-translational modification Phosphotyrosine. S68 carries the post-translational modification Phosphoserine. The tract at residues 83–136 (SGVLGNGLCELDRLLQELNATQFNITDEIMSQFPSSKMAEGEEKEDQSEDKSSP) is interaction with PTK2/FAK1. The LD motif 2 motif lies at 92 to 104 (ELDRLLQELNATQ). Residues 116–154 (PSSKMAEGEEKEDQSEDKSSPTVPPSPFPAPSKPSATSA) form a disordered region. The span at 137–147 (TVPPSPFPAPS) shows a compositional bias: pro residues. 3 positions are modified to phosphoserine: S141, S164, and S186. Positions 157–168 (ELDRLMASLSDF) match the LD motif 3 motif. The segment at 171–204 (QNHLPASGPPQPPAASPTREGCPSPPGQTSKGSL) is disordered. T188 carries the phosphothreonine modification. S194 is subject to Phosphoserine. Residues 203-215 (SLDTMLGLLQSDL) carry the LD motif 4 motif. LIM zinc-binding domains are found at residues 226-285 (GLCG…RFSP), 286-343 (RCGF…QLFA), 344-403 (PRCQ…QRGS), and 404-461 (LCAT…KLFG). Phosphoserine is present on S403. T407 carries the post-translational modification Phosphothreonine.

It belongs to the paxillin family. In terms of assembly, homooligomer. Interacts with PPARG. Interacts with TRAF4. Interacts with CRIP2. Interacts with HSPB1. Interacts with ILK. Interacts with LIMS1 and LIMS2. Interacts with NCK2. Interacts with NUDT16L1. Interacts with PAK. Interacts with PTPN12. Interacts with TCF3. Interacts with TCF7L2. Interacts with VCL. Interacts (via LD motif 3) with GIT1. Also interacts with GIT2. Forms a complex with ARHGEF7. Interacts with AR/androgen receptor in a ligand-dependent manner. Interacts with CSK. Interacts with PTK2/FAK1 and PTK2B/PYK2. Interacts with SLC6A3. Interacts with SLC6A4. Interacts with NR3C1. Interacts with SMAD3. Interacts with MAPK15. Interacts with SRC. Interacts with LYN. Interacts with talin. Interacts (via LIM zinc-binding domain 2) with CBLC (via RING-type zinc finger); the interaction is direct and enhances CBLC E3 ubiquitin-protein ligase activity. Interacts with PARVA. Interacts with PXN. In terms of processing, phosphorylated by gonadotropin-releasing hormone-activated SRC. As to expression, ubiquitously expressed. Higher expression is detected in lung and spleen. Expression decreases during pregnancy in mammary glands. Expressed in all brain areas, with higher levels in cerebellum, prefrontal cortex and hypothalamus. Expressed in smooth muscle, myoepithelial cells and platelets (at protein level). Preferentially expressed in mesenchymal versus epithelial cells (at protein level).

Its subcellular location is the cell junction. It is found in the focal adhesion. The protein resides in the nucleus matrix. It localises to the cytoplasm. The protein localises to the cytoskeleton. In terms of biological role, functions as a molecular adapter coordinating multiple protein-protein interactions at the focal adhesion complex and in the nucleus. Links various intracellular signaling modules to plasma membrane receptors and regulates the Wnt and TGFB signaling pathways. May also regulate SLC6A3 and SLC6A4 targeting to the plasma membrane hence regulating their activity. In the nucleus, functions as a nuclear receptor coactivator regulating glucocorticoid, androgen, mineralocorticoid and progesterone receptor transcriptional activity. May play a role in the processes of cell growth, proliferation, migration, differentiation and senescence. May have a zinc-dependent DNA-binding activity. The chain is Transforming growth factor beta-1-induced transcript 1 protein (Tgfb1i1) from Mus musculus (Mouse).